Consider the following 114-residue polypeptide: Large ribosomal subunit protein uL22c (114 aa).

Belongs to the universal ribosomal protein uL22 family. Part of the 50S ribosomal subunit.

The protein resides in the plastid. It is found in the chloroplast. In terms of biological role, this protein binds specifically to 23S rRNA. Functionally, the globular domain of the protein is located near the polypeptide exit tunnel on the outside of the subunit, while an extended beta-hairpin is found that lines the wall of the exit tunnel in the center of the 70S ribosome. The chain is Large ribosomal subunit protein uL22c (rpl22) from Gracilaria tenuistipitata var. liui (Red alga).